The sequence spans 93 residues: UPF0358 protein lin1058 (93 aa).

Belongs to the UPF0358 family.

This is UPF0358 protein lin1058 from Listeria innocua serovar 6a (strain ATCC BAA-680 / CLIP 11262).